Consider the following 145-residue polypeptide: Superoxide dismutase [Mn/Fe] (145 aa).

Positions 10 and 64 each coordinate Fe(3+). Mn(2+) contacts are provided by His-10 and His-64.

Belongs to the iron/manganese superoxide dismutase family. Mn(2+) is required as a cofactor. Fe(3+) serves as cofactor.

It carries out the reaction 2 superoxide + 2 H(+) = H2O2 + O2. Its function is as follows. Destroys superoxide anion radicals which are normally produced within the cells and which are toxic to biological systems. Catalyzes the dismutation of superoxide anion radicals into O2 and H2O2 by successive reduction and oxidation of the transition metal ion at the active site. The polypeptide is Superoxide dismutase [Mn/Fe] (sodA) (Streptococcus salivarius).